The following is a 325-amino-acid chain: Glutarate 2-hydroxylase (325 aa).

Residues His160, Asp162, and His292 each contribute to the Fe cation site.

Belongs to the glutarate hydroxylase family. Homotetramer. Requires Fe(2+) as cofactor.

It catalyses the reaction glutarate + 2-oxoglutarate + O2 = (S)-2-hydroxyglutarate + succinate + CO2. It participates in amino-acid degradation. Acts as an alpha-ketoglutarate-dependent dioxygenase catalyzing hydroxylation of glutarate (GA) to L-2-hydroxyglutarate (L2HG). Functions in a L-lysine degradation pathway that proceeds via cadaverine, glutarate and L-2-hydroxyglutarate. The sequence is that of Glutarate 2-hydroxylase from Escherichia coli (strain 55989 / EAEC).